Reading from the N-terminus, the 443-residue chain is Ribosomal protein uS12 methylthiotransferase RimO (443 aa).

The 111-residue stretch at 9–119 (PKIGMVSLGC…VVSAVHDAAP (111 aa)) folds into the MTTase N-terminal domain. 6 residues coordinate [4Fe-4S] cluster: C18, C54, C83, C150, C154, and C157. The Radical SAM core domain maps to 136-373 (LTPRHYSYLK…MEKAAQISEA (238 aa)). Residues 376–443 (QAKIGRDIAT…EHDLFGVALS (68 aa)) enclose the TRAM domain.

Belongs to the methylthiotransferase family. RimO subfamily. [4Fe-4S] cluster serves as cofactor.

It localises to the cytoplasm. It catalyses the reaction L-aspartate(89)-[ribosomal protein uS12]-hydrogen + (sulfur carrier)-SH + AH2 + 2 S-adenosyl-L-methionine = 3-methylsulfanyl-L-aspartate(89)-[ribosomal protein uS12]-hydrogen + (sulfur carrier)-H + 5'-deoxyadenosine + L-methionine + A + S-adenosyl-L-homocysteine + 2 H(+). In terms of biological role, catalyzes the methylthiolation of an aspartic acid residue of ribosomal protein uS12. The chain is Ribosomal protein uS12 methylthiotransferase RimO from Zymomonas mobilis subsp. mobilis (strain ATCC 31821 / ZM4 / CP4).